The following is a 280-amino-acid chain: MSVLETKLKSQMSKSAKIARNMNKLPDEIDRLRKRIERINKKRKPTSSNIRDLEKSNKQLVTKQQKLADLQVEYTKIEKKINETKINLQKEQSRNQKKLSSMLDKNTKGNEEIMEKLLTNSDQINEISNQIKKAVNQKEIIEYDVFLSHSSLDKEDYVSKISEKLIEKGLKVFEDVKVFEIGKSQTETMNMGILNSRFVVVFLSPNFIESGWSRYEFLSFLNREINEEHVIILPIWHKVSVEDVRAYNPYLVDKYALNTSDFSIEEIVEKIYQVIVNSKN.

A coiled-coil region spans residues 22–94 (MNKLPDEIDR…KINLQKEQSR (73 aa)). In terms of domain architecture, TIR spans 141-275 (IEYDVFLSHS…EIVEKIYQVI (135 aa)). NAD(+)-binding positions include 150–151 (SS) and glutamate 180. Glutamate 216 is a catalytic residue.

The protein resides in the secreted. It catalyses the reaction NAD(+) + H2O = ADP-D-ribose + nicotinamide + H(+). The enzyme catalyses NADP(+) + H2O = ADP-D-ribose 2'-phosphate + nicotinamide + H(+). In terms of biological role, virulence factor that suppresses host Toll-like receptor 2 (TLR2)-mediated NF-kappa-B signaling upon infection. NAD(+) hydrolase (NADase) that catalyzes cleavage of NAD(+) into ADP-D-ribose (ADPR) and nicotinamide. Also able to hydrolyze NADP(+), but not other NAD(+)-related molecules. Able to reduce NAD(+) levels in host cells. The protein is NAD(+) hydrolase TirS of Staphylococcus aureus (strain MSSA476).